Reading from the N-terminus, the 1206-residue chain is uncharacterized protein (1206 aa).

Disordered stretches follow at residues 133–547 (YDLD…PVDY), 568–837 (FASS…DQLL), and 859–1206 (RQRA…KATS). Composition is skewed to pro residues over residues 139 to 151 (IPPP…PGPP) and 159 to 234 (GESP…PPAP). A Phosphoserine modification is found at serine 255. Residues 305-319 (VRTSSIPVQEAPGAS) are compositionally biased toward low complexity. A compositionally biased stretch (basic and acidic residues) spans 351 to 363 (RALEPEQPREPRP). The span at 384-413 (APPPAPPLPPPAPPLPPPAPSLPPAAPPLP) shows a compositional bias: pro residues. Positions 414-436 (STELAAPPSSGFMKTSKSNSPAL) are enriched in low complexity. The segment covering 454 to 467 (VDWRDPRQMEKLRS) has biased composition (basic and acidic residues). Residues 522–531 (PEKSPSSSSL) show a composition bias toward low complexity. Positions 568 to 577 (FASSAEKEAK) are enriched in basic and acidic residues. The span at 656–671 (LPKATPGLTLPLKPTP) shows a compositional bias: low complexity. Phosphothreonine is present on threonine 680. Over residues 732–747 (AEKDLASVRQREKPET) the composition is skewed to basic and acidic residues. Positions 1001–1016 (IPPPPEFSNDPEPPAP) are enriched in pro residues. Residues 1028–1041 (PRNNFSDLGQSWGP) show a composition bias toward polar residues. Omega-N-methylarginine occurs at positions 1051, 1083, and 1094. The span at 1170–1184 (PHGNTHYGSPINTFT) shows a compositional bias: polar residues.

This is an uncharacterized protein from Mus musculus (Mouse).